The chain runs to 310 residues: N-acetyl-gamma-glutamyl-phosphate reductase (310 aa).

Residue C117 is part of the active site.

This sequence belongs to the NAGSA dehydrogenase family. Type 2 subfamily.

The protein localises to the cytoplasm. The catalysed reaction is N-acetyl-L-glutamate 5-semialdehyde + phosphate + NADP(+) = N-acetyl-L-glutamyl 5-phosphate + NADPH + H(+). It functions in the pathway amino-acid biosynthesis; L-arginine biosynthesis; N(2)-acetyl-L-ornithine from L-glutamate: step 3/4. In terms of biological role, catalyzes the NADPH-dependent reduction of N-acetyl-5-glutamyl phosphate to yield N-acetyl-L-glutamate 5-semialdehyde. The polypeptide is N-acetyl-gamma-glutamyl-phosphate reductase (Brucella suis (strain ATCC 23445 / NCTC 10510)).